Consider the following 61-residue polypeptide: Large ribosomal subunit protein bL32 (61 aa).

The span at 1 to 16 (MAVPKRKTSPSKRGMR) shows a compositional bias: basic residues. The disordered stretch occupies residues 1–39 (MAVPKRKTSPSKRGMRRSADALKAPTYIEDKNSGELRRP). Positions 28 to 39 (IEDKNSGELRRP) are enriched in basic and acidic residues.

This sequence belongs to the bacterial ribosomal protein bL32 family.

This is Large ribosomal subunit protein bL32 from Rhizobium meliloti (strain 1021) (Ensifer meliloti).